The primary structure comprises 208 residues: Thymidylate kinase (208 aa).

10–17 provides a ligand contact to ATP; that stretch reads GLEGAGKT.

This sequence belongs to the thymidylate kinase family.

The enzyme catalyses dTMP + ATP = dTDP + ADP. In terms of biological role, phosphorylation of dTMP to form dTDP in both de novo and salvage pathways of dTTP synthesis. This Actinobacillus pleuropneumoniae serotype 5b (strain L20) protein is Thymidylate kinase.